The sequence spans 115 residues: Large ribosomal subunit protein bL19 (115 aa).

Belongs to the bacterial ribosomal protein bL19 family.

Functionally, this protein is located at the 30S-50S ribosomal subunit interface and may play a role in the structure and function of the aminoacyl-tRNA binding site. The protein is Large ribosomal subunit protein bL19 of Buchnera aphidicola subsp. Acyrthosiphon pisum (strain 5A).